Here is a 215-residue protein sequence, read N- to C-terminus: NAD(P)H-hydrate epimerase (215 aa).

A YjeF N-terminal domain is found at 8–212 (MYNIENKGHD…KIGIPPEAEE (205 aa)). (6S)-NADPHX is bound at residue 57-61 (NNGGD). Asn-58 and Asp-124 together coordinate K(+). (6S)-NADPHX-binding positions include 128 to 134 (GTGISGE), Tyr-139, and Asp-157. A K(+)-binding site is contributed by Ser-160.

This sequence belongs to the NnrE/AIBP family. Requires K(+) as cofactor.

The catalysed reaction is (6R)-NADHX = (6S)-NADHX. It catalyses the reaction (6R)-NADPHX = (6S)-NADPHX. Functionally, catalyzes the epimerization of the S- and R-forms of NAD(P)HX, a damaged form of NAD(P)H that is a result of enzymatic or heat-dependent hydration. This is a prerequisite for the S-specific NAD(P)H-hydrate dehydratase to allow the repair of both epimers of NAD(P)HX. The sequence is that of NAD(P)H-hydrate epimerase from Nitrosopumilus maritimus (strain SCM1).